The sequence spans 463 residues: Glutamate--tRNA ligase 1 (463 aa).

The 'HIGH' region motif lies at 10-20 (PSPTGYLHIGG). Positions 238 to 242 (KLSKR) match the 'KMSKS' region motif. ATP is bound at residue lysine 241.

Belongs to the class-I aminoacyl-tRNA synthetase family. Glutamate--tRNA ligase type 1 subfamily. In terms of assembly, monomer.

The protein localises to the cytoplasm. The enzyme catalyses tRNA(Glu) + L-glutamate + ATP = L-glutamyl-tRNA(Glu) + AMP + diphosphate. In terms of biological role, catalyzes the attachment of glutamate to tRNA(Glu) in a two-step reaction: glutamate is first activated by ATP to form Glu-AMP and then transferred to the acceptor end of tRNA(Glu). The sequence is that of Glutamate--tRNA ligase 1 from Helicobacter pylori (strain G27).